The following is a 481-amino-acid chain: ATP synthase subunit alpha (481 aa).

Residue 145-152 (GDRQTGKT) coordinates ATP.

Belongs to the ATPase alpha/beta chains family. F-type ATPases have 2 components, CF(1) - the catalytic core - and CF(0) - the membrane proton channel. CF(1) has five subunits: alpha(3), beta(3), gamma(1), delta(1), epsilon(1). CF(0) has three main subunits: a(1), b(2) and c(9-12). The alpha and beta chains form an alternating ring which encloses part of the gamma chain. CF(1) is attached to CF(0) by a central stalk formed by the gamma and epsilon chains, while a peripheral stalk is formed by the delta and b chains.

Its subcellular location is the cell membrane. It carries out the reaction ATP + H2O + 4 H(+)(in) = ADP + phosphate + 5 H(+)(out). In terms of biological role, produces ATP from ADP in the presence of a proton gradient across the membrane. The alpha chain is a regulatory subunit. The sequence is that of ATP synthase subunit alpha from Carsonella ruddii (strain PV).